The primary structure comprises 1396 residues: G2/mitotic-specific cyclin-B3 (1396 aa).

Disordered regions lie at residues 1-64 (MPPP…TNAS), 259-398 (KEKP…PQME), and 477-500 (TTEKDPPSQWPSALPKKHISPGEL). Over residues 10–34 (SKLETEKAQSNKITPREEQQSEKIG) the composition is skewed to basic and acidic residues. The D-box signature appears at 54 to 62 (RSVFEDVTN). The segment covering 264-273 (VKKPHFRKKK) has biased composition (basic residues). The segment covering 306–315 (LQENTNNKDA) has biased composition (polar residues). Ser-703 carries the phosphoserine modification. Positions 775–796 (VDEPLSHQSPHIQNHSDTTKEA) are disordered. Over residues 780 to 790 (SHQSPHIQNHS) the composition is skewed to polar residues.

It belongs to the cyclin family. Cyclin AB subfamily. Interacts with CDK2 kinase. Post-translationally, ubiquitinated. Ubiquitination leads to its degradation during anaphase entry, after degradation of CCNB1. In terms of tissue distribution, expressed in testis. Also expressed in the fetal ovary, but not in the adult.

The protein localises to the nucleus. Its function is as follows. Cyclins are positive regulatory subunits of the cyclin-dependent kinases (CDKs), and thereby play an essential role in the control of the cell cycle, notably via their destruction during cell division. Its tissue specificity suggest that it may be required during early meiotic prophase I. The sequence is that of G2/mitotic-specific cyclin-B3 (Ccnb3) from Mus musculus (Mouse).